The chain runs to 72 residues: Probable movement protein p8 (72 aa).

The segment at Gly16–Ile58 is disordered. Residues Ser40–Ile58 show a composition bias toward polar residues.

The protein belongs to the carmovirus/necrovirus/panicovirus movement protein p8 family.

Functionally, cell-to-cell movement. This chain is Probable movement protein p8, found in Tobacco necrosis virus (strain A) (TNV-A).